Here is a 270-residue protein sequence, read N- to C-terminus: CASP-like protein 4A1 (270 aa).

Residues 1–110 form a disordered region; the sequence is MEELEKTQKF…PSFSSSSSTP (110 aa). Residues 1 to 121 are Cytoplasmic-facing; the sequence is MEELEKTQKF…ESKWASLIRK (121 aa). Positions 24 to 66 are enriched in polar residues; it reads SSPINFEMSSRSSLHSLPQTTIESPPDSPTLSSIPDSHGSSPH. Over residues 85–97 the composition is skewed to basic and acidic residues; the sequence is NGEEEKKVSESRR. Residues 100-110 show a composition bias toward low complexity; sequence RPSFSSSSSTP. The chain crosses the membrane as a helical span at residues 122-142; the sequence is ALLGFRVIAFVSCLVSFSVMV. The Extracellular segment spans residues 143–161; the sequence is SDRDKGWAHDSFYNYKEFR. A helical membrane pass occupies residues 162-182; it reads FCLAANVIGFVYSGFMICDLV. Topologically, residues 183–198 are cytoplasmic; the sequence is YLLSTSIRRSRHNLRH. Residues 199–221 form a helical membrane-spanning segment; it reads FLEFGLDQMLAYLLASASTSASI. The Extracellular portion of the chain corresponds to 222-246; sequence RVDDWQSNWGADKFPDLARASVALS. A helical membrane pass occupies residues 247–267; that stretch reads YVSFVAFAFCSLASGYALCAL. Over 268 to 270 the chain is Cytoplasmic; the sequence is RSI.

Belongs to the Casparian strip membrane proteins (CASP) family. Homodimer and heterodimers.

The protein resides in the cell membrane. This is CASP-like protein 4A1 from Arabidopsis thaliana (Mouse-ear cress).